Reading from the N-terminus, the 168-residue chain is Desumoylating isopeptidase 1 (168 aa).

A PPPDE domain is found at Tyr7–Asp149. The active site involves His38. The short motif at Ile83–Leu91 is the Nuclear export signal 1 element. Residue Cys108 is part of the active site. A Nuclear export signal 2 motif is present at residues Pro139 to Ile153.

The protein belongs to the DeSI family. As to quaternary structure, homodimer. Interacts with UBQLN4; leading to the export of UBQLN4 from the nucleus.

It is found in the cytoplasm. Its subcellular location is the nucleus. The enzyme catalyses S-hexadecanoyl-L-cysteinyl-[protein] + H2O = L-cysteinyl-[protein] + hexadecanoate + H(+). With respect to regulation, palmostatin B inhibits its palmitoyl protein thioesterase activity. Protease which deconjugates SUMO1, SUMO2 and SUMO3 from some substrate proteins. Has isopeptidase but not SUMO-processing activity. Desumoylates ZBTB46. Collaborates with UBQLN4 in the export of ubiquitinated proteins from the nucleus to the cytoplasm. Exhibits palmitoyl protein thioesterase (S-depalmitoylation) activity towards synthetic substrates 4-methylumbelliferyl-6-S-palmitoyl-beta-D-glucopyranoside and S-depalmitoylation probe 5 (DPP-5). The protein is Desumoylating isopeptidase 1 of Homo sapiens (Human).